Here is a 408-residue protein sequence, read N- to C-terminus: Acetylornithine aminotransferase (408 aa).

Residues 107-108 (GT) and F141 contribute to the pyridoxal 5'-phosphate site. Residue R144 participates in N(2)-acetyl-L-ornithine binding. 227 to 230 (DEIQ) contacts pyridoxal 5'-phosphate. Position 256 is an N6-(pyridoxal phosphate)lysine (K256). T284 is a binding site for N(2)-acetyl-L-ornithine. T285 is a binding site for pyridoxal 5'-phosphate.

It belongs to the class-III pyridoxal-phosphate-dependent aminotransferase family. ArgD subfamily. In terms of assembly, homodimer. It depends on pyridoxal 5'-phosphate as a cofactor.

The protein localises to the cytoplasm. The catalysed reaction is N(2)-acetyl-L-ornithine + 2-oxoglutarate = N-acetyl-L-glutamate 5-semialdehyde + L-glutamate. The protein operates within amino-acid biosynthesis; L-arginine biosynthesis; N(2)-acetyl-L-ornithine from L-glutamate: step 4/4. The protein is Acetylornithine aminotransferase of Xanthomonas axonopodis pv. citri (strain 306).